Reading from the N-terminus, the 329-residue chain is NADH-quinone oxidoreductase subunit H (329 aa).

9 helical membrane-spanning segments follow: residues Leu-9 to Ile-29, Gly-42 to Phe-62, Phe-75 to Ile-95, Ile-117 to Gly-137, Ile-154 to Val-174, Gly-188 to Ala-208, Leu-238 to Ile-258, Trp-269 to Trp-291, and Trp-309 to Ile-329.

This sequence belongs to the complex I subunit 1 family. As to quaternary structure, NDH-1 is composed of 14 different subunits. Subunits NuoA, H, J, K, L, M, N constitute the membrane sector of the complex.

The protein resides in the cell inner membrane. The enzyme catalyses a quinone + NADH + 5 H(+)(in) = a quinol + NAD(+) + 4 H(+)(out). Its function is as follows. NDH-1 shuttles electrons from NADH, via FMN and iron-sulfur (Fe-S) centers, to quinones in the respiratory chain. The immediate electron acceptor for the enzyme in this species is believed to be ubiquinone. Couples the redox reaction to proton translocation (for every two electrons transferred, four hydrogen ions are translocated across the cytoplasmic membrane), and thus conserves the redox energy in a proton gradient. This subunit may bind ubiquinone. This is NADH-quinone oxidoreductase subunit H from Helicobacter pylori (strain J99 / ATCC 700824) (Campylobacter pylori J99).